A 332-amino-acid polypeptide reads, in one-letter code: tRNA (cytosine(38)-C(5))-methyltransferase (332 aa).

An SAM-dependent MTase C5-type domain is found at 3 to 332; that stretch reads HKILELYSGI…ISELLKILFE (330 aa). S-adenosyl-L-homocysteine is bound by residues 12-14, 33-34, 55-56, and Ser-75; these read IGG, DI, and NI. The active site involves Cys-78. S-adenosyl-L-homocysteine is bound by residues Gln-79, Ser-97, and 316–317; that span reads NS.

Belongs to the class I-like SAM-binding methyltransferase superfamily. C5-methyltransferase family.

The protein localises to the cytoplasm. It localises to the nucleus. It catalyses the reaction cytidine(38) in tRNA + S-adenosyl-L-methionine = 5-methylcytidine(38) in tRNA + S-adenosyl-L-homocysteine + H(+). It carries out the reaction a 2'-deoxycytidine in DNA + S-adenosyl-L-methionine = a 5-methyl-2'-deoxycytidine in DNA + S-adenosyl-L-homocysteine + H(+). Functionally, specifically methylates cytosine 38 in the anticodon loop of tRNA(Asp). Also has DNA (cytosine-5)-methyltransferase activity. Shows affinity for both tRNA(Asp) and DNA substrates. This chain is tRNA (cytosine(38)-C(5))-methyltransferase, found in Spodoptera frugiperda (Fall armyworm).